Here is a 278-residue protein sequence, read N- to C-terminus: Shikimate dehydrogenase (NADP(+)) (278 aa).

Shikimate is bound by residues 18–20 and threonine 65; that span reads SRS. Residue lysine 69 is the Proton acceptor of the active site. Glutamate 80 provides a ligand contact to NADP(+). Positions 89 and 104 each coordinate shikimate. Residues 129-133 and leucine 218 each bind NADP(+); that span reads GAGGS. Tyrosine 220 contacts shikimate. Residue glycine 241 participates in NADP(+) binding.

The protein belongs to the shikimate dehydrogenase family. As to quaternary structure, homodimer.

The enzyme catalyses shikimate + NADP(+) = 3-dehydroshikimate + NADPH + H(+). It functions in the pathway metabolic intermediate biosynthesis; chorismate biosynthesis; chorismate from D-erythrose 4-phosphate and phosphoenolpyruvate: step 4/7. Its function is as follows. Involved in the biosynthesis of the chorismate, which leads to the biosynthesis of aromatic amino acids. Catalyzes the reversible NADPH linked reduction of 3-dehydroshikimate (DHSA) to yield shikimate (SA). The sequence is that of Shikimate dehydrogenase (NADP(+)) from Rhodopseudomonas palustris (strain TIE-1).